The primary structure comprises 374 residues: Ribonuclease D (374 aa).

The 169-residue stretch at 3 to 171 (YQLITTDDGL…MAIRLVEETT (169 aa)) folds into the 3'-5' exonuclease domain. The region spanning 210-289 (KGRHLACLQK…AETQTMDAAE (80 aa)) is the HRDC domain.

It belongs to the RNase D family. A divalent metal cation serves as cofactor.

Its subcellular location is the cytoplasm. The enzyme catalyses Exonucleolytic cleavage that removes extra residues from the 3'-terminus of tRNA to produce 5'-mononucleotides.. Functionally, exonuclease involved in the 3' processing of various precursor tRNAs. Initiates hydrolysis at the 3'-terminus of an RNA molecule and releases 5'-mononucleotides. This Musicola paradisiaca (strain Ech703) (Dickeya paradisiaca) protein is Ribonuclease D.